The chain runs to 140 residues: Putative cell wall protein (140 aa).

A signal peptide spans 1–21 (MASSLITSAVIVVVLSLVLGS). A compositionally biased stretch (gly residues) spans 85–98 (TGGGIPSYNGGQGA). Residues 85 to 140 (TGGGIPSYNGGQGAGPHTQLPGGDDTLVPNPGFEAPTPTIGAGTGSNGQVPPVPLP) are disordered.

As to expression, inflorescence.

The protein localises to the secreted. It localises to the cell wall. This Arabidopsis thaliana (Mouse-ear cress) protein is Putative cell wall protein.